The chain runs to 339 residues: DNA-directed RNA polymerase subunit alpha (339 aa).

Residues 1–233 (MVREEVAGST…DLFLPFLHAE (233 aa)) are alpha N-terminal domain (alpha-NTD). The alpha C-terminal domain (alpha-CTD) stretch occupies residues 266–339 (GIPLNCIFID…IDLLKNKLSF (74 aa)).

This sequence belongs to the RNA polymerase alpha chain family. As to quaternary structure, in plastids the minimal PEP RNA polymerase catalytic core is composed of four subunits: alpha, beta, beta', and beta''. When a (nuclear-encoded) sigma factor is associated with the core the holoenzyme is formed, which can initiate transcription.

The protein localises to the plastid. It is found in the chloroplast. The enzyme catalyses RNA(n) + a ribonucleoside 5'-triphosphate = RNA(n+1) + diphosphate. Its function is as follows. DNA-dependent RNA polymerase catalyzes the transcription of DNA into RNA using the four ribonucleoside triphosphates as substrates. The chain is DNA-directed RNA polymerase subunit alpha from Elymus canadensis (Canada wild rye).